Consider the following 484-residue polypeptide: Serine/arginine-rich splicing factor 11 (484 aa).

Positions 1–33 are disordered; that stretch reads MSNTTVVPSTAGPGPSGGPGGGGGGGGGGGGTE. The residue at position 2 (Ser2) is an N-acetylserine. Residues 14-32 show a composition bias toward gly residues; sequence GPSGGPGGGGGGGGGGGGT. The region spanning 33–113 is the RRM domain; the sequence is EVIQVTNVSP…ALIVVPYAEG (81 aa). Residue Lys197 forms a Glycyl lysine isopeptide (Lys-Gly) (interchain with G-Cter in SUMO2) linkage. Residue Ser207 is modified to Phosphoserine. Lys211 participates in a covalent cross-link: Glycyl lysine isopeptide (Lys-Gly) (interchain with G-Cter in SUMO2). Ser212 is modified (phosphoserine). The segment at 233-484 is disordered; that stretch reads ISAAIEPDKK…HHEEDMDMSD (252 aa). Residues 244–308 show a composition bias toward basic residues; it reads EKRRHSRSRS…ERGRRSRSTS (65 aa). Tandem repeats lie at residues 247–255, 258–265, 267–274, 275–282, 285–292, 293–300, 302–309, 321–328, 334–341, and 346–353. The 10 X 8 AA approximate repeats of R-R-S-R-S-R-S-R stretch occupies residues 247–353; the sequence is RHSRSRSRSR…RRRRSRSGTR (107 aa). Basic and acidic residues predominate over residues 309 to 320; it reads KTRDKKKEDKEK. Ser323 bears the Phosphoserine mark. Thr325 carries the post-translational modification Phosphothreonine. Over residues 334-379 the composition is skewed to basic residues; sequence RRSRSASRERRRRRSRSGTRSPKKPRSPKRKLSRSPSPRRHKKEKK. 3 stretches are compositionally biased toward basic and acidic residues: residues 380–395, 402–424, and 433–478; these read KDKD…ERST, KDKE…VTRD, and DSEK…HHEE. A phosphoserine mark is found at Ser414 and Ser434. Thr447 is subject to Phosphothreonine. 4 positions are modified to phosphoserine: Ser449, Ser456, Ser464, and Ser483.

This sequence belongs to the splicing factor SR family. In terms of assembly, interacts with PUF60.

It is found in the nucleus. Functionally, may function in pre-mRNA splicing. The polypeptide is Serine/arginine-rich splicing factor 11 (SRSF11) (Homo sapiens (Human)).